The primary structure comprises 220 residues: Ribonuclease HII (220 aa).

Residues 32–220 form the RNase H type-2 domain; the sequence is KHIAGIDEAG…FAPIKGRFDC (189 aa). The a divalent metal cation site is built by Asp38, Glu39, and Asp130.

The protein belongs to the RNase HII family. It depends on Mn(2+) as a cofactor. Mg(2+) is required as a cofactor.

It is found in the cytoplasm. The enzyme catalyses Endonucleolytic cleavage to 5'-phosphomonoester.. Endonuclease that specifically degrades the RNA of RNA-DNA hybrids. This Brucella ovis (strain ATCC 25840 / 63/290 / NCTC 10512) protein is Ribonuclease HII.